The following is a 1383-amino-acid chain: Negative regulator of sporulation MDS3 (1383 aa).

3 Kelch repeats span residues 124-179, 199-246, and 356-402; these read CLYL…SPRF, GLFI…KDKE, and QNVV…WGGF. The span at 450–460 shows a compositional bias: polar residues; the sequence is GRSNNRTSSFV. Disordered stretches follow at residues 450-506, 625-644, 653-825, 858-884, 1063-1114, 1251-1289, and 1321-1369; these read GRSN…VLDA, NQRLRSKSSNSESSSSDIPK, LLSS…DLFS, LDSFSSGKSSMAKVSSVPGENPDSDES, NNSR…VDKE, QLKESQLQSKSSPIIPTVSTVTPSPLPSISGVPSPRLPQ, and SMTD…KSSS. Residues 631-644 show a composition bias toward low complexity; sequence KSSNSESSSSDIPK. The span at 693–707 shows a compositional bias: basic and acidic residues; the sequence is VNREEGSDCSKDRKT. 3 stretches are compositionally biased toward low complexity: residues 726 to 758, 803 to 815, and 858 to 874; these read NSTSSFQSNSSSLLTSHLQDIPPQLPLPDEQIP, ESPFSSPRPSMSG, and LDSFSSGKSSMAKVSSV. Over residues 1084–1094 the composition is skewed to basic and acidic residues; the sequence is EGEKQEEIVSK. Residues 1251 to 1280 are compositionally biased toward low complexity; it reads QLKESQLQSKSSPIIPTVSTVTPSPLPSIS. A compositionally biased stretch (polar residues) spans 1341–1352; the sequence is LQQTMLSRTPTN.

Interacts with SIT4.

It is found in the cytoplasm. Functionally, negatively regulates early sporulation-specific genes. TOR signaling pathway component that contributes to morphogenesis as a regulator of this key morphogenetic pathway. Required for growth and hyphal formation at pH 9, for full virulence in a mouse model of systemic infection and for biofilm formation. Involved in chlamydospore formation, distinctive morphological feature of the fungal pathogen C.albicans that can be induced to form in oxygen-limited environments and has been reported in clinical specimens. This Candida albicans (strain SC5314 / ATCC MYA-2876) (Yeast) protein is Negative regulator of sporulation MDS3 (MDS3).